The primary structure comprises 306 residues: Protein-methionine-sulfoxide reductase catalytic subunit MsrP (306 aa).

The tat-type signal signal peptide spans 1-45; the sequence is MLIRHAPDLTDNDVTDHSLYLKRRTLMAGVAGLGVAGASASHAQA. Mo-molybdopterin contacts are provided by residues Asn69, 72–73, Cys127, Thr162, Asn210, Arg215, and 226–228; these read YE and GIK.

Belongs to the MsrP family. Heterodimer of a catalytic subunit (MsrP) and a heme-binding subunit (MsrQ). Mo-molybdopterin serves as cofactor. Predicted to be exported by the Tat system. The position of the signal peptide cleavage has not been experimentally proven.

The protein localises to the periplasm. It carries out the reaction L-methionyl-[protein] + a quinone + H2O = L-methionyl-(S)-S-oxide-[protein] + a quinol. It catalyses the reaction L-methionyl-[protein] + a quinone + H2O = L-methionyl-(R)-S-oxide-[protein] + a quinol. Part of the MsrPQ system that repairs oxidized periplasmic proteins containing methionine sulfoxide residues (Met-O), using respiratory chain electrons. Thus protects these proteins from oxidative-stress damage caused by reactive species of oxygen and chlorine generated by the host defense mechanisms. MsrPQ is essential for the maintenance of envelope integrity under bleach stress, rescuing a wide series of structurally unrelated periplasmic proteins from methionine oxidation. The catalytic subunit MsrP is non-stereospecific, being able to reduce both (R-) and (S-) diastereoisomers of methionine sulfoxide. This chain is Protein-methionine-sulfoxide reductase catalytic subunit MsrP, found in Caulobacter vibrioides (strain ATCC 19089 / CIP 103742 / CB 15) (Caulobacter crescentus).